A 486-amino-acid polypeptide reads, in one-letter code: Probable FAD-binding monooxygenase ltbD (486 aa).

Residues 186-243 (PAGDGGTNDQGPSRAQSTASSGGSGRPRSTESPQSGAQASTTPTSPPTTQSTGDDPAA) are disordered. Residues 194–206 (DQGPSRAQSTASS) are compositionally biased toward polar residues. Over residues 220 to 241 (SGAQASTTPTSPPTTQSTGDDP) the composition is skewed to low complexity.

This sequence belongs to the FAD-binding monooxygenase family. In terms of assembly, homodimer. It depends on FAD as a cofactor.

In terms of biological role, probable FAD-binding monooxygenase; part of the gene cluster that mediates the biosynthesis of luteodienoside A, a glycosylated polyketide consisting of an unusual 1-O-beta-D-glucopyranosyl-myo-inositol (glucinol) ester of 3-hydroxy-2,2,4-trimethylocta-4,6-dienoic acid. The HR-PKS ltbA produces the trimethylated polyketide chain from acetyl-CoA, malonyl-CoA and S-adenosylmethionine (SAM), and the ltbA cAT domain then uses glucinol produced by the glycosyltransferase ltbB as an offloading substrate to release luteodienoside A. Since ltbA and ltbB are sufficient for the biosynthesis of luteodienoside A, the functions of the methyltransferase ltbC and the FAD-binding monooxygenase ltbD within the pathway remain obscur. This is Probable FAD-binding monooxygenase ltbD from Aspergillus luteorubrus.